The sequence spans 115 residues: Large ribosomal subunit protein bL19 (115 aa).

Belongs to the bacterial ribosomal protein bL19 family.

This protein is located at the 30S-50S ribosomal subunit interface and may play a role in the structure and function of the aminoacyl-tRNA binding site. The chain is Large ribosomal subunit protein bL19 from Pectobacterium atrosepticum (strain SCRI 1043 / ATCC BAA-672) (Erwinia carotovora subsp. atroseptica).